The primary structure comprises 212 residues: MPADPSEEVAPQVPKTELEELQINAQGVADESLESTRRMLALCEESKEAGIRTLVALDDQGEQLDRIEEGMDQINADMREAEKNLSGMEKCCGICVLPCNKSQSFKEDDGTWKGNDDGKVVNNQPQRVMDDRNGMMAQAGYIGRITNDAREDEMEENMGQVNTMIGNLRNMALDMGSELENQNRQIDRINRKGESNEARIAVANQRAHQLLK.

T-SNARE coiled-coil homology domains follow at residues 26–88 (QGVA…LSGM) and 148–210 (DARE…AHQL).

It belongs to the SNAP-25 family. As to expression, exclusively found in brain and ganglia.

It localises to the synapse. The protein resides in the synaptosome. Functionally, may play an important role in the synaptic function of specific neuronal systems. Associates with proteins involved in vesicle docking and membrane fusion. This chain is Synaptosomal-associated protein 25 (Snap25), found in Drosophila melanogaster (Fruit fly).